The following is a 437-amino-acid chain: Transcription factor TGAL5 (437 aa).

The segment at 33–75 (QEPYSNSQSVGSTTDSSSAQNTMSQAELVSPASMRSDSGQEQQ) is disordered. The span at 37–50 (SNSQSVGSTTDSSS) shows a compositional bias: low complexity. Positions 51-75 (AQNTMSQAELVSPASMRSDSGQEQQ) are enriched in polar residues. In terms of domain architecture, bZIP spans 126-170 (DAKTERRLAQNREAARKSRLRKKAYVQQLETSRIRLQQIEQELQR). Residues 128 to 148 (KTERRLAQNREAARKSRLRKK) are basic motif. Residues 154-168 (LETSRIRLQQIEQEL) form a leucine-zipper region. Positions 191–405 (AVMFDMDYTR…RALSSLWASR (215 aa)) constitute a DOG1 domain.

Belongs to the bZIP family. Interacts with NPR5/NH4, NH5.1 and NH5.2.

It localises to the nucleus. Transcriptional regulator involved in defense response. This is Transcription factor TGAL5 from Oryza sativa subsp. japonica (Rice).